We begin with the raw amino-acid sequence, 138 residues long: MAPK kinase substrate protein At1g80180 (138 aa).

Positions 52 to 138 (TSEVQDQTTK…RKRPAKRRSR (87 aa)) are disordered. Over residues 69–81 (KPIRTDGGMERSR) the composition is skewed to basic and acidic residues. Position 98 is a phosphoserine (S98). S105 carries the phosphoserine; by MAPK6 modification. Positions 121-138 (QPGKKVNQRKRPAKRRSR) are enriched in basic residues.

Expressed in developing cotyledons, mature cotyledons, cotyledon epidermis and stomata.

In terms of biological role, may play a role in the regulation of stomata patterning. The protein is MAPK kinase substrate protein At1g80180 of Arabidopsis thaliana (Mouse-ear cress).